A 91-amino-acid chain; its full sequence is Sec-independent protein translocase protein TatA (91 aa).

The helical transmembrane segment at 1–21 (MGSMSVWHWVIVAVVVMLLFG) threads the bilayer. Positions 42 to 91 (GMADDETQPTNTTSVPPVGPNDPVRTLPHQGAPGTAPQQTHVPAGDHKAV) are disordered.

Belongs to the TatA/E family. The Tat system comprises two distinct complexes: a TatABC complex, containing multiple copies of TatA, TatB and TatC subunits, and a separate TatA complex, containing only TatA subunits. Substrates initially bind to the TatABC complex, which probably triggers association of the separate TatA complex to form the active translocon.

It localises to the cell inner membrane. Its function is as follows. Part of the twin-arginine translocation (Tat) system that transports large folded proteins containing a characteristic twin-arginine motif in their signal peptide across membranes. TatA could form the protein-conducting channel of the Tat system. The chain is Sec-independent protein translocase protein TatA from Methylorubrum populi (strain ATCC BAA-705 / NCIMB 13946 / BJ001) (Methylobacterium populi).